A 522-amino-acid chain; its full sequence is Gypsy retrotransposon integrase-like protein 1 (522 aa).

The Integrase catalytic domain occupies 135-292 (KVENPWSLVT…TPYFQMFSRN (158 aa)). Residue Ser502 is modified to Phosphoserine.

This is Gypsy retrotransposon integrase-like protein 1 (GIN1) from Pongo abelii (Sumatran orangutan).